The primary structure comprises 323 residues: MAGRPGSSNAEAAGAVGPTDEARGQAESSQKIEDLMEMVKKLQKVGSLEPRVEVLINRINEVQQAKKKASEELGDARTVWETLQKELDSLSGEKVRLKEILSKKQETLRVLRLHCQDKENEAQRKQTMLQECKERISALNSQIEQEKNKQRQLRLDFEEQLEDLMGQYKDLWEFHKPERLALEISTLDSGKEQLLKEEKLVEAKLEDVKHRLCSQFGAKGHTINEGLFLRSPEAAAVVHLFEEENRKAQELLEAAAQRQEQLQQKCQQLQQKRQRLKEELEKLGVQVLAQAQSKQEEEAGLGEAANPKPLGVSEEKDQEPSTK.

The span at 1–10 (MAGRPGSSNA) shows a compositional bias: polar residues. Disordered regions lie at residues 1-31 (MAGRPGSSNAEAAGAVGPTDEARGQAESSQK) and 294-323 (KQEEEAGLGEAANPKPLGVSEEKDQEPSTK). Basic and acidic residues-rich tracts occupy residues 20–31 (DEARGQAESSQK) and 313–323 (SEEKDQEPSTK). The stretch at 25-290 (QAESSQKIED…EKLGVQVLAQ (266 aa)) forms a coiled coil.

The protein belongs to the SYCE family. Homodimer. Found in a complex with SYCP1 and SYCE2. Interacts with SYCP1, SYCE2 and SYCE3. Interacts with SIX6OS1.

The protein resides in the nucleus. The protein localises to the chromosome. Its function is as follows. Major component of the transverse central element of synaptonemal complexes (SCS), formed between homologous chromosomes during meiotic prophase. Requires SYCP1 in order to be incorporated into the central element. May have a role in the synaptonemal complex assembly, stabilization and recombination. This Bos taurus (Bovine) protein is Synaptonemal complex central element protein 1 (SYCE1).